Consider the following 362-residue polypeptide: Serine/threonine-protein kinase SBK2 (362 aa).

Positions 1–11 are enriched in basic and acidic residues; that stretch reads MPGKQSEDKPM. The interval 1–26 is disordered; that stretch reads MPGKQSEDKPMEVSTVEDGGDEGLGG. The Protein kinase domain maps to 62 to 330; sequence YEEVRPLGQG…IKSYLGQPWK (269 aa). ATP contacts are provided by residues 68–76 and Lys91; that span reads LGQGRFGRV. The Proton acceptor role is filled by Asp183. Residues 329–362 are disordered; sequence WKQREGEAEELATELREDGWRGGQEAAKGEQPAC.

It belongs to the protein kinase superfamily. Ser/Thr protein kinase family. STKL subfamily.

The catalysed reaction is L-seryl-[protein] + ATP = O-phospho-L-seryl-[protein] + ADP + H(+). It carries out the reaction L-threonyl-[protein] + ATP = O-phospho-L-threonyl-[protein] + ADP + H(+). This Mus musculus (Mouse) protein is Serine/threonine-protein kinase SBK2 (Sbk2).